A 283-amino-acid chain; its full sequence is MTQTQPVGTLRLTIDDQGPQGQSRAVEQFHQGALRVIRPHYLDDSGQVCYTIIAIGGGYLGGDVYEQQFTIKDNAKALITTQSATKIYRTPQGPATQHTEINVGENAVLEYLADQTIAYREATYHQFTKVALHPSATFVMSEQITPGWHPDGKHFAYDEMRLHTEITDSTTGRLVLLDNLLLRPDSREGSFGWTEQYTHSGQMIVMGEGVDKQLVAELNEQLAAHPDVYGAVNFLSAPGTLLRGFIARTLSNRTEELINLHEHIASLLRGRWRGQEPVNLRKY.

The tract at residues 1 to 21 is disordered; that stretch reads MTQTQPVGTLRLTIDDQGPQG.

Belongs to the UreD family. As to quaternary structure, ureD, UreF and UreG form a complex that acts as a GTP-hydrolysis-dependent molecular chaperone, activating the urease apoprotein by helping to assemble the nickel containing metallocenter of UreC. The UreE protein probably delivers the nickel.

The protein localises to the cytoplasm. Its function is as follows. Probably acts in the maturation of urease via the functional incorporation of the urease nickel metallocenter. Required for urease expression. The protein is Urease accessory protein UreD of Corynebacterium glutamicum (strain ATCC 13032 / DSM 20300 / JCM 1318 / BCRC 11384 / CCUG 27702 / LMG 3730 / NBRC 12168 / NCIMB 10025 / NRRL B-2784 / 534).